The following is a 732-amino-acid chain: Probable boron transporter 3 (732 aa).

Met1 is modified (N-acetylmethionine). Topologically, residues 1-37 (MDEAESFVPFQGIKKDVKGRLNCYKQDWISGLRAGFR) are cytoplasmic. Residues 38–58 (ILAPTTYIFFASAIPVITFGE) traverse the membrane as a helical segment. Topologically, residues 59-77 (QLERDTDGKITAVQTLVST) are extracellular. A helical membrane pass occupies residues 78–98 (ALCGVIHSIIGGQPLLILGVA). Residues 99 to 123 (EPTVIMYTFMFNFAKSRTDLGSNLF) lie on the Cytoplasmic side of the membrane. The chain crosses the membrane as a helical span at residues 124–144 (LAWTGWVCLWTGLLLFLLAVL). Residues 145 to 157 (GACTFINRFTRLA) are Extracellular-facing. Residues 158 to 178 (GELFGILIAMLFMQEAIRGIV) traverse the membrane as a helical segment. Residues 179–197 (DEFGVPGRTNPRSAEFQPA) are Cytoplasmic-facing. The helical transmembrane segment at 198-218 (WVFANGMFGLVLSSGLLYTGL) threads the bilayer. Residues 219–234 (KSRKARSWRFGAEWLR) are Extracellular-facing. The helical transmembrane segment at 235 to 255 (GFIADYGVPVMVVVWTCISYI) threads the bilayer. Residues 256-291 (PWKSVPQGIPRRLVSPNPWSPGAYQNWTVIKEMVDV) lie on the Cytoplasmic side of the membrane. Residues 292–312 (PVLYILLAVVPASMIAVLYYF) traverse the membrane as a helical segment. Over 313 to 339 (DHSVASQLAQQEDFNLRKPPAYHYDLF) the chain is Extracellular. The helical transmembrane segment at 340-360 (LLGFLTILCGLIGIPPSNGVI) threads the bilayer. Residues 361 to 463 (PQSPMHTKSL…ILPVEVKEQR (103 aa)) are Cytoplasmic-facing. Residues 464 to 484 (VSNFLQAMMVAGCVAAMPLIK) traverse the membrane as a helical segment. Topologically, residues 485 to 556 (RIPSSVLWGY…LFQTAYLLVC (72 aa)) are extracellular. Residues 557–577 (FGITWVPVAGVLFPLMIMFLV) form a helical membrane-spanning segment. At 578–732 (PVRQYVLPNF…QRLSNLGKSV (155 aa)) the chain is on the cytoplasmic side. The segment at 695–732 (GGGEISPRSSAGRAPFSPRSATGGGGGEQRLSNLGKSV) is disordered.

The protein belongs to the anion exchanger (TC 2.A.31.3) family.

Its subcellular location is the membrane. Its function is as follows. Probable boron transporter. Boron is essential for maintaining the integrity of plants cell walls. The protein is Probable boron transporter 3 (BOR3) of Arabidopsis thaliana (Mouse-ear cress).